We begin with the raw amino-acid sequence, 585 residues long: Proline--tRNA ligase (585 aa).

This sequence belongs to the class-II aminoacyl-tRNA synthetase family. ProS type 1 subfamily. In terms of assembly, homodimer.

It is found in the cytoplasm. The catalysed reaction is tRNA(Pro) + L-proline + ATP = L-prolyl-tRNA(Pro) + AMP + diphosphate. Functionally, catalyzes the attachment of proline to tRNA(Pro) in a two-step reaction: proline is first activated by ATP to form Pro-AMP and then transferred to the acceptor end of tRNA(Pro). As ProRS can inadvertently accommodate and process non-cognate amino acids such as alanine and cysteine, to avoid such errors it has two additional distinct editing activities against alanine. One activity is designated as 'pretransfer' editing and involves the tRNA(Pro)-independent hydrolysis of activated Ala-AMP. The other activity is designated 'posttransfer' editing and involves deacylation of mischarged Ala-tRNA(Pro). The misacylated Cys-tRNA(Pro) is not edited by ProRS. The protein is Proline--tRNA ligase of Nocardia farcinica (strain IFM 10152).